A 240-amino-acid chain; its full sequence is Flavin-dependent thymidylate synthase (240 aa).

A ThyX domain is found at 13 to 235 (ITVELVKHSA…PETHAAFEKQ (223 aa)). FAD is bound by residues Ser-64, 87 to 89 (RHR), and Glu-95. DUMP is bound by residues 84-87 (EFMR), 95-99 (EESGR), and Arg-167. A ThyX motif motif is present at residues 87-97 (RHRIASYNEES). FAD contacts are provided by residues 183–185 (NAR) and Asn-189. Arg-194 serves as a coordination point for dUMP. Arg-194 acts as the Involved in ionization of N3 of dUMP, leading to its activation in catalysis.

The protein belongs to the thymidylate synthase ThyX family. Homotetramer. FAD is required as a cofactor.

It carries out the reaction dUMP + (6R)-5,10-methylene-5,6,7,8-tetrahydrofolate + NADPH + H(+) = dTMP + (6S)-5,6,7,8-tetrahydrofolate + NADP(+). The protein operates within pyrimidine metabolism; dTTP biosynthesis. Functionally, catalyzes the reductive methylation of 2'-deoxyuridine-5'-monophosphate (dUMP) to 2'-deoxythymidine-5'-monophosphate (dTMP) while utilizing 5,10-methylenetetrahydrofolate (mTHF) as the methyl donor, and NADPH and FADH(2) as the reductant. This Tropheryma whipplei (strain TW08/27) (Whipple's bacillus) protein is Flavin-dependent thymidylate synthase.